Reading from the N-terminus, the 244-residue chain is Proteasome subunit alpha 2 (244 aa).

Belongs to the peptidase T1A family. As to quaternary structure, the 20S proteasome core is composed of 14 alpha and 14 beta subunits that assemble into four stacked heptameric rings, resulting in a barrel-shaped structure. The two inner rings, each composed of seven catalytic beta subunits, are sandwiched by two outer rings, each composed of seven alpha subunits. The catalytic chamber with the active sites is on the inside of the barrel. Has a gated structure, the ends of the cylinder being occluded by the N-termini of the alpha-subunits. Is capped at one or both ends by the proteasome regulatory ATPase, PAN.

It localises to the cytoplasm. With respect to regulation, the formation of the proteasomal ATPase PAN-20S proteasome complex, via the docking of the C-termini of PAN into the intersubunit pockets in the alpha-rings, triggers opening of the gate for substrate entry. Interconversion between the open-gate and close-gate conformations leads to a dynamic regulation of the 20S proteasome proteolysis activity. Component of the proteasome core, a large protease complex with broad specificity involved in protein degradation. This Haloarcula marismortui (strain ATCC 43049 / DSM 3752 / JCM 8966 / VKM B-1809) (Halobacterium marismortui) protein is Proteasome subunit alpha 2.